The chain runs to 381 residues: Homoserine O-succinyltransferase (381 aa).

Positions 45 to 360 (NAVLVCHALN…PHGHDAFLLD (316 aa)) constitute an AB hydrolase-1 domain. Ser151 serves as the catalytic Nucleophile. Arg221 contributes to the substrate binding site. Residues Asp321 and His354 contribute to the active site. Asp355 provides a ligand contact to substrate.

It belongs to the AB hydrolase superfamily. MetX family. As to quaternary structure, homodimer.

The protein localises to the cytoplasm. The catalysed reaction is L-homoserine + succinyl-CoA = O-succinyl-L-homoserine + CoA. It functions in the pathway amino-acid biosynthesis; L-methionine biosynthesis via de novo pathway; O-succinyl-L-homoserine from L-homoserine: step 1/1. Functionally, transfers a succinyl group from succinyl-CoA to L-homoserine, forming succinyl-L-homoserine. In Burkholderia multivorans (strain ATCC 17616 / 249), this protein is Homoserine O-succinyltransferase.